The primary structure comprises 236 residues: 2-C-methyl-D-erythritol 4-phosphate cytidylyltransferase (236 aa).

It belongs to the IspD/TarI cytidylyltransferase family. IspD subfamily.

The catalysed reaction is 2-C-methyl-D-erythritol 4-phosphate + CTP + H(+) = 4-CDP-2-C-methyl-D-erythritol + diphosphate. It participates in isoprenoid biosynthesis; isopentenyl diphosphate biosynthesis via DXP pathway; isopentenyl diphosphate from 1-deoxy-D-xylulose 5-phosphate: step 2/6. Its function is as follows. Catalyzes the formation of 4-diphosphocytidyl-2-C-methyl-D-erythritol from CTP and 2-C-methyl-D-erythritol 4-phosphate (MEP). The protein is 2-C-methyl-D-erythritol 4-phosphate cytidylyltransferase of Pseudomonas savastanoi pv. phaseolicola (strain 1448A / Race 6) (Pseudomonas syringae pv. phaseolicola (strain 1448A / Race 6)).